We begin with the raw amino-acid sequence, 475 residues long: Ataxin-10 (475 aa).

The residue at position 10 (arginine 10) is an Omega-N-methylarginine. Serine 12 carries the post-translational modification Phosphoserine; by AURKB. The residue at position 77 (serine 77) is a Phosphoserine; by PLK1. At threonine 82 the chain carries Phosphothreonine; by PLK1. The residue at position 430 (serine 430) is a Phosphoserine.

This sequence belongs to the ataxin-10 family. In terms of assembly, homooligomer. Interacts with GNB2. Interacts with IQCB1. Interacts with OGT. Post-translationally, polyubiquitinated. Phosphorylation at Ser-12 by AURKB promotes the association of ATXN10 with PLK1. Phosphorylation at Ser-77 and Thr-82 by PLK1 may play a role in the regulation of cytokinesis and may stimulate the proteasome-mediated degradation of ATXN10. As to expression, expressed in the central nervous system.

It is found in the cytoplasm. The protein resides in the perinuclear region. It localises to the midbody. The protein localises to the cytoskeleton. Its subcellular location is the cilium basal body. It is found in the microtubule organizing center. The protein resides in the centrosome. It localises to the centriole. Its function is as follows. May play a role in the regulation of cytokinesis. May play a role in signaling by stimulating protein glycosylation. Induces neuritogenesis by activating the Ras-MAP kinase pathway and is necessary for the survival of cerebellar neurons. Does not appear to play a major role in ciliogenesis. This is Ataxin-10 (ATXN10) from Homo sapiens (Human).